The primary structure comprises 435 residues: 5-methylthioadenosine/S-adenosylhomocysteine deaminase (435 aa).

Residues histidine 65 and histidine 67 each coordinate Zn(2+). Substrate-binding residues include glutamate 94, arginine 150, and histidine 189. Histidine 216 is a binding site for Zn(2+). The substrate site is built by glutamate 219 and aspartate 304. Aspartate 304 contributes to the Zn(2+) binding site.

Belongs to the metallo-dependent hydrolases superfamily. MTA/SAH deaminase family. Requires Zn(2+) as cofactor.

The enzyme catalyses S-adenosyl-L-homocysteine + H2O + H(+) = S-inosyl-L-homocysteine + NH4(+). The catalysed reaction is S-methyl-5'-thioadenosine + H2O + H(+) = S-methyl-5'-thioinosine + NH4(+). In terms of biological role, catalyzes the deamination of 5-methylthioadenosine and S-adenosyl-L-homocysteine into 5-methylthioinosine and S-inosyl-L-homocysteine, respectively. Is also able to deaminate adenosine. The polypeptide is 5-methylthioadenosine/S-adenosylhomocysteine deaminase (Bacillus cereus (strain ZK / E33L)).